Consider the following 308-residue polypeptide: MQIEVKNISKVFEPKSPIEFTALKGVSLSFEQGEFISIIGPTGSGKTTFIEHLNALNLPSIGSIVIKGKFKDQKDKKNPVLIESEVILQKTKRKIKQIKEIRRQIGIVFQFAEYQLFESTIEKDIAFGPISLGISKEEAYKRAKKYISIVGLPENYLQRSPFELSGGQKRRVALAGILAMDPDFLIFDEPTAGLDPQGSKEILEIFGKLNSEGKTVIIVTHNLDHALEWTNRTIFFNDGFVIKDGKTYDVLEDVDFLRENEMEPPKLLVLKKLLQDKGINLSKVRSIEDFAREINQYLETKNKTKENN.

Positions 3-263 (IEVKNISKVF…VDFLRENEME (261 aa)) constitute an ABC transporter domain. 40–47 (GPTGSGKT) lines the ATP pocket.

Belongs to the ABC transporter superfamily. Energy-coupling factor EcfA family. Forms a stable energy-coupling factor (ECF) transporter complex composed of 2 membrane-embedded substrate-binding proteins (S component), 2 ATP-binding proteins (A component) and 2 transmembrane proteins (T component).

It localises to the cell membrane. Functionally, ATP-binding (A) component of a common energy-coupling factor (ECF) ABC-transporter complex. Unlike classic ABC transporters this ECF transporter provides the energy necessary to transport a number of different substrates. This chain is Energy-coupling factor transporter ATP-binding protein EcfA2, found in Mycoplasma mobile (strain ATCC 43663 / 163K / NCTC 11711) (Mesomycoplasma mobile).